The sequence spans 1576 residues: DExH-box ATP-dependent RNA helicase DExH2 (1576 aa).

Positions 15–78 (EATGAWATKV…ERRLSLFKGD (64 aa)) constitute an R3H domain. Residues 227-396 (ISAVESNQVV…FGGCPVVRVP (170 aa)) form the Helicase ATP-binding domain. Position 240 to 247 (240 to 247 (GETGCGKT)) interacts with ATP. The DEIH box motif lies at 343–346 (DEIH). Residues 561–735 (LIVKLMKKIC…ELCLQVKMLD (175 aa)) enclose the Helicase C-terminal domain. Disordered regions lie at residues 1137–1165 (ATSP…MGSK), 1177–1223 (MEES…SLNN), and 1260–1576 (DMGN…PSDQ). Over residues 1281–1301 (PNSANSMDLGNMEENTPSDLA) the composition is skewed to polar residues. Positions 1305 to 1319 (KKKEPKSVSKLDLGS) are enriched in basic and acidic residues. Residues 1349–1360 (KQPEKKRSRSKK) carry the PH1 motif. Basic residues predominate over residues 1352-1363 (EKKRSRSKKRKS). Polar residues predominate over residues 1381–1412 (ANENEQTEPKSANNLDLGNMKENTPSDLANEN). Positions 1454–1465 (KQPKKKRSRSKK) match the PH2 motif. Over residues 1455–1467 (QPKKKRSRSKKCK) the composition is skewed to basic residues. A compositionally biased stretch (basic and acidic residues) spans 1490–1508 (EQKDPESVNRLDPGKEKES). Polar residues predominate over residues 1509-1524 (IPSNLVSGNEQPDSNT). Residues 1528 to 1537 (KKPKKKKRKL) are compositionally biased toward basic residues. The Nuclear localization signal motif lies at 1530 to 1537 (PKKKKRKL). Residues 1540 to 1562 (NFDSVNNMEEKMPSTNVLSQGNK) show a composition bias toward polar residues.

Belongs to the DExH box helicase family. As to quaternary structure, homodimer.

It localises to the nucleus. It carries out the reaction ATP + H2O = ADP + phosphate + H(+). Its function is as follows. May function as an ATP-dependent RNA/DNA helicase. Binds DNA in vitro in a non-specific manner. The chain is DExH-box ATP-dependent RNA helicase DExH2 from Arabidopsis thaliana (Mouse-ear cress).